The primary structure comprises 346 residues: Short-chain dehydrogenase/reductase bet4 (346 aa).

Residues 1 to 35 (MTPAKAPSHAKKPEAGSQPISSMWTQMFPPKPTYT) form a disordered region. NADP(+) is bound by residues Val56, Lys80, Asp105, and Asn132. Ser191 functions as the Proton donor in the catalytic mechanism. Tyr222 and Lys226 together coordinate NADP(+). Residue Tyr222 is the Proton acceptor of the active site. Lys226 acts as the Lowers pKa of active site Tyr in catalysis.

This sequence belongs to the short-chain dehydrogenases/reductases (SDR) family.

It carries out the reaction dehydroprobetaenone I + AH2 = probetaenone I + A. It functions in the pathway mycotoxin biosynthesis. Its function is as follows. Short-chain dehydrogenase/reductase; part of the gene cluster that mediates the biosynthesis of betaenones, phytotoxic polyketides involved in leaf spot disease in sugar beets. The first step of the pathway is the synthesis of dehydroprobetaenone I by the polyketide synthase bet1 and the enoyl reductase bet3 via condensation of one acetyl-CoA starter unit with 7 malonyl-CoA units and 5 methylations. The C-terminal reductase (R) domain of bet1 catalyzes the reductive release of the polyketide chain. Because bet1 lacks a designated enoylreductase (ER) domain, the required activity is provided the enoyl reductase bet3. The short-chain dehydrogenase/reductase bet4 then catalyzes reduction of dehydroprobetaenone I to probetaenone I. The cytochrome P450 monooxygenase bet2 catalyzes successive epoxidation, oxidation (resulting from epoxide opening) and hydroxylation to install a tertiary alcohol in the decaline ring to yield betaenone C from dehydroprobetaenone I and betaenone B from probetaenone I. The FAD-linked oxidoreductase (orf1) is probably responsible for the conversion of betaenone C to betaenone A via an intramolecular aldol reaction between C-1 and C-17 to form the bridged tricyclic system in betaenone A. The protein is Short-chain dehydrogenase/reductase bet4 of Neocamarosporium betae (Beet black rot fungus).